Here is a 256-residue protein sequence, read N- to C-terminus: Ribonuclease 3 (256 aa).

Residues 3 to 125 (LDALQQRLGY…IVGAVFLDAG (123 aa)) enclose the RNase III domain. Residue Glu-38 participates in Mg(2+) binding. Residue Asp-42 is part of the active site. Asp-111 and Glu-114 together coordinate Mg(2+). Glu-114 is a catalytic residue. Residues 152 to 222 (DAKTLLQEYL…AKLALDEVQK (71 aa)) form the DRBM domain. The tract at residues 230–256 (RSRAERTGKTRKQPVPQDPQLSLRLKE) is disordered.

This sequence belongs to the ribonuclease III family. As to quaternary structure, homodimer. It depends on Mg(2+) as a cofactor.

Its subcellular location is the cytoplasm. It catalyses the reaction Endonucleolytic cleavage to 5'-phosphomonoester.. In terms of biological role, digests double-stranded RNA. Involved in the processing of primary rRNA transcript to yield the immediate precursors to the large and small rRNAs (23S and 16S). Processes some mRNAs, and tRNAs when they are encoded in the rRNA operon. Processes pre-crRNA and tracrRNA of type II CRISPR loci if present in the organism. This is Ribonuclease 3 from Cupriavidus necator (strain ATCC 17699 / DSM 428 / KCTC 22496 / NCIMB 10442 / H16 / Stanier 337) (Ralstonia eutropha).